A 156-amino-acid polypeptide reads, in one-letter code: Small ribosomal subunit protein uS7 (156 aa).

It belongs to the universal ribosomal protein uS7 family. Part of the 30S ribosomal subunit. Contacts proteins S9 and S11.

One of the primary rRNA binding proteins, it binds directly to 16S rRNA where it nucleates assembly of the head domain of the 30S subunit. Is located at the subunit interface close to the decoding center, probably blocks exit of the E-site tRNA. The protein is Small ribosomal subunit protein uS7 of Mycoplasmopsis pulmonis (strain UAB CTIP) (Mycoplasma pulmonis).